We begin with the raw amino-acid sequence, 1048 residues long: FHIP family protein GJ17503 (1048 aa).

Positions 1–15 are enriched in polar residues; the sequence is MSWLRTSPLRQSLTR. Residues 1–32 are disordered; sequence MSWLRTSPLRQSLTRNSGSSGSGNSSATTTLR. Low complexity predominate over residues 16–26; sequence NSGSSGSGNSS. Serine 500 is subject to Phosphoserine. Disordered stretches follow at residues 652–675, 813–871, and 924–984; these read TTTA…GRRD, APMH…KRRS, and ARGA…ESGL. A compositionally biased stretch (low complexity) spans 816–838; the sequence is HQQHQQQQLQHTTNPTQQQQAQQ. 2 stretches are compositionally biased toward polar residues: residues 839-857 and 929-954; these read RSTY…SPTS and QEQS…TAVV. Positions 955-978 are enriched in low complexity; the sequence is SSSNSSIGGSTQTLSATHSSSTLH.

Belongs to the FHIP family.

This is FHIP family protein GJ17503 from Drosophila virilis (Fruit fly).